The chain runs to 3259 residues: Striated muscle-specific serine/threonine-protein kinase (3259 aa).

The segment at 1–30 is disordered; sequence MQKARGTRGEDAGTRAPPSPGVPPKRAKVG. Position 33 is an omega-N-methylarginine (Arg-33). An Ig-like 1 domain is found at 45–126; the sequence is PVFLRPLKNA…GKASCEAVLT (82 aa). The residue at position 141 (Ser-141) is a Phosphoserine. Disordered regions lie at residues 155–185, 198–226, 278–716, and 816–880; these read RAFSTPTGGSDTLVGTSLDTPPTSVTGTSEE, EQEAGSGGGTRPLPGSPRQAQTTGAGPRH, PSGL…DDSY, and VRPG…KVSL. The span at 158–185 shows a compositional bias: polar residues; the sequence is STPTGGSDTLVGTSLDTPPTSVTGTSEE. The span at 301-317 shows a compositional bias: pro residues; the sequence is PALPPPSKSALLPPPSP. Ser-368 and Ser-375 each carry phosphoserine. Thr-379 is modified (phosphothreonine). Ser-382 and Ser-385 each carry phosphoserine. Residues 404 to 422 show a composition bias toward basic and acidic residues; it reads ILDKLQFFEERRRSLERSD. Phosphoserine is present on Ser-423. At Thr-453 the chain carries Phosphothreonine. Phosphoserine is present on residues Ser-457, Ser-463, Ser-493, Ser-511, Ser-531, and Ser-554. The segment covering 459–473 has biased composition (basic and acidic residues); sequence EELRSPRGSVAERRR. The segment covering 510–522 has biased composition (basic and acidic residues); that stretch reads TSREELVRSHESL. Composition is skewed to basic and acidic residues over residues 624–638 and 663–680; these read PESRTKAPSARKREP and EKNRAGPEAEKRLRRGPE. The Ig-like 2 domain occupies 727-817; sequence PVFEIPLQNM…ASCASSLAVR (91 aa). The segment covering 820–830 has biased composition (polar residues); the sequence is ASTSPFSSPIT. 3 consecutive Ig-like domains span residues 874–963, 968–1056, and 1069–1157; these read PTFK…ARLE, PESR…DELT, and PLFT…AQLY. A disulfide bond links Cys-994 and Cys-1046. Residues Ser-1133 and Ser-1177 each carry the phosphoserine modification. Residues 1162-1185 are disordered; it reads RTAASGPSSKLEKMPSIPEEPEHG. The 91-residue stretch at 1193–1283 folds into the Ig-like 6 domain; the sequence is PDFLRPLQDL…AACYAHLYVT (91 aa). In terms of domain architecture, Fibronectin type-III 1 spans 1290 to 1387; it reads PDGAPQVVAV…PSEPVQLLEH (98 aa). Residues 1367–1379 are compositionally biased toward low complexity; sequence SSGKSSSKPSAPS. A disordered region spans residues 1367–1386; that stretch reads SSGKSSSKPSAPSEPVQLLE. The Ig-like 7 domain occupies 1490-1578; the sequence is PRFESIMEDV…GEVSCKAELS (89 aa). One can recognise a Protein kinase 1 domain in the interval 1606 to 1859; sequence YDIHQEIGRG…AEETLEHPWF (254 aa). ATP contacts are provided by residues 1612–1620 and Lys-1635; that span reads IGRGAFSYL. Asp-1724 acts as the Proton acceptor in catalysis. Disordered regions lie at residues 1913–2244, 2336–2451, and 2463–2562; these read MPRR…QMPA, AKFK…SPVL, and RLSS…SQPN. The span at 1918–1927 shows a compositional bias: low complexity; it reads PPSGGLSSSS. Phosphoserine occurs at positions 1993, 2004, 2019, 2020, and 2042. Over residues 2009 to 2019 the composition is skewed to basic and acidic residues; sequence SPRRPELRRGS. An Asymmetric dimethylarginine; alternate modification is found at Arg-2060. Position 2060 is an omega-N-methylarginine; alternate (Arg-2060). Positions 2069 to 2081 are enriched in low complexity; sequence AQRLQALRQRLLR. 2 positions are modified to phosphoserine: Ser-2114 and Ser-2135. Omega-N-methylarginine is present on Arg-2144. The span at 2168-2179 shows a compositional bias: polar residues; that stretch reads ESPSLSALSETQ. The span at 2180–2189 shows a compositional bias: pro residues; it reads PPSPALPSAP. 2 positions are modified to phosphoserine: Ser-2182 and Ser-2207. The segment covering 2193–2207 has biased composition (polar residues); the sequence is ITKSPEPSAATSRDS. Residues 2208–2218 show a composition bias toward pro residues; that stretch reads PQPPAPQPVPE. Basic and acidic residues predominate over residues 2219–2229; sequence KIPEPKPEPVR. The span at 2230–2244 shows a compositional bias: low complexity; the sequence is AAKPAQPPLALQMPA. Basic and acidic residues predominate over residues 2336–2345; the sequence is AKFKRSRESP. The segment covering 2346-2355 has biased composition (low complexity); that stretch reads LSRGLRLLSR. Residues 2356–2372 show a composition bias toward basic and acidic residues; that stretch reads SRSEERGPFRGAEDDGI. Ser-2376 carries the phosphoserine modification. Thr-2380 carries the phosphothreonine modification. Residues 2384 to 2395 are compositionally biased toward basic and acidic residues; that stretch reads LVRRPERSRSVQ. Residues Ser-2410, Ser-2414, Ser-2438, Ser-2439, Ser-2444, and Ser-2448 each carry the phosphoserine modification. Over residues 2463 to 2484 the composition is skewed to low complexity; the sequence is RLSSRLQRSGSSEDSGGASGRS. Polar residues predominate over residues 2510–2520; it reads QLASQTGATTP. Residues Ser-2521 and Ser-2524 each carry the phosphoserine modification. Low complexity predominate over residues 2521–2540; that stretch reads SAESLGSEASGTSGSSAPGE. The segment covering 2543–2554 has biased composition (basic residues); sequence SRHRWGLSRLRK. Ser-2559 is subject to Phosphoserine. The Ig-like 8 domain occupies 2583-2673; it reads PPVFHIKLKD…GSITSSCTVA (91 aa). Residues Cys-2605 and Cys-2657 are joined by a disulfide bond. In terms of domain architecture, Fibronectin type-III 2 spans 2680–2774; sequence KLAPPEVPQT…KVFIRGTQDS (95 aa). Thr-2771 carries the phosphothreonine modification. Disordered stretches follow at residues 2771-2829 and 2855-2957; these read TQDS…MSAN and TQQA…PQKP. Ser-2774 is subject to Phosphoserine. A compositionally biased stretch (pro residues) spans 2793–2810; that stretch reads RAPPPDSPTSLVPTPPLA. Residues 2814-2828 are compositionally biased toward low complexity; the sequence is SQASTLSPSTSSMSA. Positions 2859-2965 constitute a Fibronectin type-III 3 domain; it reads EPSPPSILVT…KPYTFLEEKA (107 aa). A compositionally biased stretch (polar residues) spans 2880-2907; that stretch reads GTLTPTSSPQGVKPAPSSSSLYMVTSFV. Positions 2910–2924 are enriched in pro residues; sequence PPDPQPPAPEPPPEP. Residues 2940-2950 are compositionally biased toward polar residues; that stretch reads SSPTPESTTLR. Ser-2941 is modified (phosphoserine). The region spanning 2958–3210 is the Protein kinase 2 domain; sequence YTFLEEKARG…LQDCLAHPWL (253 aa). ATP-binding positions include 2964–2972 and Lys-2987; that span reads KARGRFGVV. The active-site Proton acceptor is the Asp-3077.

It belongs to the protein kinase superfamily. CAMK Ser/Thr protein kinase family. In terms of assembly, interacts with MTM1. In terms of processing, may be autophosphorylated. In terms of tissue distribution, isoform 2 is highly expressed in differentiated arterial smooth muscle cells (ASMC) in the medial layer of the aorta. Weakly detected in brain and testis and to a lesser extent in organs rich in striated muscle or visceral smooth muscle.

It localises to the nucleus. The enzyme catalyses L-seryl-[protein] + ATP = O-phospho-L-seryl-[protein] + ADP + H(+). It carries out the reaction L-threonyl-[protein] + ATP = O-phospho-L-threonyl-[protein] + ADP + H(+). Its function is as follows. Isoform 2 may have a role in regulating the growth and differentiation of arterial smooth muscle cells. The chain is Striated muscle-specific serine/threonine-protein kinase (Speg) from Rattus norvegicus (Rat).